The primary structure comprises 660 residues: Phosphatidylinositol-3-phosphate phosphatase MTMR7 (660 aa).

The 379-residue stretch at G126–Y504 folds into the Myotubularin phosphatase domain. Residues N250, N275, and I276 each coordinate a 1,2-diacyl-sn-glycero-3-phospho-(1D-myo-inositol-3-phosphate). Residue C338 is the Phosphocysteine intermediate of the active site. Residues S339, D340, G341, W342, D343, R344, and R384 each coordinate a 1,2-diacyl-sn-glycero-3-phospho-(1D-myo-inositol-3-phosphate). A coiled-coil region spans residues R514 to K558. Residues K554–A660 form a disordered region. A compositionally biased stretch (polar residues) spans S566 to Q596. Position 578 is a phosphothreonine (T578). Residues A641–D653 are compositionally biased toward basic and acidic residues.

It belongs to the protein-tyrosine phosphatase family. Non-receptor class myotubularin subfamily. As to quaternary structure, heterodimer (via C-terminus) with MTMR9 (via coiled coil domain); the interaction enhances MTMR7 catalytic activity. Does not homodimerize. Interacts with RAB1B (in GDP-bound form).

Its subcellular location is the cytoplasm. It is found in the endomembrane system. The catalysed reaction is a 1,2-diacyl-sn-glycero-3-phospho-(1D-myo-inositol-3-phosphate) + H2O = a 1,2-diacyl-sn-glycero-3-phospho-(1D-myo-inositol) + phosphate. It carries out the reaction 1D-myo-inositol 1,3-bisphosphate + H2O = 1D-myo-inositol 1-phosphate + phosphate. Interaction with MTMR9 increases phosphatase activity. Functionally, lipid phosphatase that specifically dephosphorylates the D-3 position of phosphatidylinositol 3-phosphate (PtdIns(3)P) and inositol 1,3-bisphosphate (Ins(1,3)P2). The polypeptide is Phosphatidylinositol-3-phosphate phosphatase MTMR7 (Pongo abelii (Sumatran orangutan)).